Reading from the N-terminus, the 277-residue chain is 2-dehydro-3-deoxyphosphooctonate aldolase (277 aa).

Belongs to the KdsA family.

It localises to the cytoplasm. It carries out the reaction D-arabinose 5-phosphate + phosphoenolpyruvate + H2O = 3-deoxy-alpha-D-manno-2-octulosonate-8-phosphate + phosphate. It functions in the pathway carbohydrate biosynthesis; 3-deoxy-D-manno-octulosonate biosynthesis; 3-deoxy-D-manno-octulosonate from D-ribulose 5-phosphate: step 2/3. Its pathway is bacterial outer membrane biogenesis; lipopolysaccharide biosynthesis. This chain is 2-dehydro-3-deoxyphosphooctonate aldolase, found in Alkalilimnicola ehrlichii (strain ATCC BAA-1101 / DSM 17681 / MLHE-1).